We begin with the raw amino-acid sequence, 662 residues long: p-hydroxybenzoic acid efflux pump subunit AaeB (662 aa).

Transmembrane regions (helical) follow at residues 22–42 (FAFK…HLQL), 52–72 (AAIV…SGAI), 76–96 (GMLR…IIIA), 102–122 (VVML…SSLV), 129–149 (VFGL…GTPL), 161–181 (EIVL…PRSI), 378–398 (LFWL…IAVV), 415–435 (FLFG…FIMP), 439–459 (QSML…GLEV), 467–487 (LGAL…TFHI), and 491–511 (LDSA…ILLI).

Belongs to the aromatic acid exporter ArAE (TC 2.A.85) family.

It localises to the cell inner membrane. In terms of biological role, forms an efflux pump with AaeA. Could function as a metabolic relief valve, allowing to eliminate certain compounds when they accumulate to high levels in the cell. This chain is p-hydroxybenzoic acid efflux pump subunit AaeB, found in Pectobacterium carotovorum subsp. carotovorum (strain PC1).